The following is a 198-amino-acid chain: Cyclin-dependent kinase inhibitor 1B (198 aa).

Positions 1–11 are enriched in polar residues; sequence MSNVRVSNGSP. The segment at 1 to 34 is disordered; sequence MSNVRVSNGSPSLERMDARQAEHPKPSACRNLFG. S10 bears the Phosphoserine; by UHMK1 mark. Residues 14–25 are compositionally biased toward basic and acidic residues; that stretch reads ERMDARQAEHPK. The interval 51–91 is interaction with CDK2; that stretch reads DMEEASQRKWNFDFQNHNPLEGRYQWQEVDKGSLPEFYYRP. At Y74 the chain carries Phosphotyrosine; by SRC. The tract at residues 85–198 is disordered; sequence PEFYYRPPRP…KKPGLRRHQT (114 aa). Y88 carries the post-translational modification Phosphotyrosine; by ABL, LYN and SRC. The residue at position 89 (Y89) is a Phosphotyrosine. Positions 104–124 are enriched in polar residues; sequence QESQDVSGSRQAVPSIGSQAY. The short motif at 153 to 169 is the Nuclear localization signal element; that stretch reads KRPAADDSSSQNKRANR. At T170 the chain carries Phosphothreonine. A compositionally biased stretch (polar residues) spans 175 to 186; the sequence is SDGSLNAGSVEQ. T187 is modified (phosphothreonine; by PKB/AKT1, CDK1 and CDK2). T198 is modified (phosphothreonine; by CaMK1, PKB/AKT1, RPS6KA1, RPS6KA3 and PIM1).

This sequence belongs to the CDI family. As to quaternary structure, forms a ternary complex composed of CCNE1, CDK2 and CDKN1B. Interacts directly with CCNE1; the interaction is inhibited by CDK2-dependent phosphorylation on Thr-187. Interacts with COPS5, subunit of the COP9 signalosome complex; the interaction leads to CDKN1B degradation. Interacts with NUP50; the interaction leads to nuclear import and degradation of phosphorylated CDKN1B. Interacts with CCND1 and SNX6. Interacts (Thr-198-phosphorylated form) with 14-3-3 proteins, binds strongly YWHAQ, weakly YWHAE and YWHAH, but not YWHAB nor YWHAZ; the interaction with YWHAQ results in translocation to the cytoplasm. Interacts with AKT1 and LYN; the interactions lead to cytoplasmic mislocation, phosphorylation of CDKN1B and inhibition of cell cycle arrest. Forms a ternary complex with CCNA2 and CDK2; CDKN1B inhibits the kinase activity of CDK2 through conformational rearrangements. Interacts (unphosphorylated form) with CDK2. Forms a complex with CDK2 and SPDYA, but does not directly interact with SPDYA. Forms a ternary complex composed of cyclin D, CDK4 and CDKN1B. Interacts (phosphorylated on Tyr-88 and Tyr-89) with CDK4; the interaction is required for cyclin D and CDK4 complex assembly, induces nuclear translocation and activates the CDK4 kinase activity. Interacts with GRB2. Interacts with PIM1. Identified in a complex with SKP1, SKP2 and CKS1B. Interacts with UHMK1; the interaction leads to cytoplasmic mislocation, phosphorylation of CDKN1B and inhibition of cell cycle arrest. Also interacts with CDK1. Dephosphorylated on Thr-187 by PPM1H, leading to CDKN1B stability. In terms of processing, phosphorylated; phosphorylation occurs on serine, threonine and tyrosine residues. Phosphorylation on Ser-10 is the major site of phosphorylation in resting cells, takes place at the G(0)-G(1) phase and leads to protein stability. Phosphorylation on other sites is greatly enhanced by mitogens, growth factors, cMYC and in certain cancer cell lines. The phosphorylated form found in the cytoplasm is inactivate. Phosphorylation on Thr-198 is required for interaction with 14-3-3 proteins. Phosphorylation on Thr-187, by CDK1 and CDK2 leads to protein ubiquitination and proteasomal degradation. Tyrosine phosphorylation promotes this process. Phosphorylation by PKB/AKT1 can be suppressed by LY294002, an inhibitor of the catalytic subunit of PI3K. Phosphorylation on Tyr-88 and Tyr-89 has no effect on binding CDK2, but is required for binding CDK4. Dephosphorylated on tyrosine residues by G-CSF. Dephosphorylated on Thr-187 by PPM1H, leading to CDKN1B stability. Ubiquitinated; in the cytoplasm by the KPC complex (composed of RNF123/KPC1 and UBAC1/KPC2) and, in the nucleus, by SCF(SKP2). The latter requires prior phosphorylation on Thr-187. Ubiquitinated; by a TRIM21-containing SCF(SKP2)-like complex; leads to its degradation. Post-translationally, subject to degradation in the lysosome. Interaction with SNX6 promotes lysosomal degradation.

The protein resides in the nucleus. The protein localises to the cytoplasm. It is found in the endosome. Functionally, important regulator of cell cycle progression. Inhibits the kinase activity of CDK2 bound to cyclin A, but has little inhibitory activity on CDK2 bound to SPDYA. Involved in G1 arrest. Potent inhibitor of cyclin E- and cyclin A-CDK2 complexes. Forms a complex with cyclin type D-CDK4 complexes and is involved in the assembly, stability, and modulation of CCND1-CDK4 complex activation. Acts either as an inhibitor or an activator of cyclin type D-CDK4 complexes depending on its phosphorylation state and/or stoichometry. The sequence is that of Cyclin-dependent kinase inhibitor 1B (CDKN1B) from Cricetulus griseus (Chinese hamster).